The primary structure comprises 242 residues: Probable proteasome subunit alpha type-7 (242 aa).

Belongs to the peptidase T1A family. The 26S proteasome consists of a 20S proteasome core and two 19S regulatory subunits. The 20S proteasome core is composed of 28 subunits that are arranged in four stacked rings, resulting in a barrel-shaped structure. The two end rings are each formed by seven alpha subunits, and the two central rings are each formed by seven beta subunits. The catalytic chamber with the active sites is on the inside of the barrel.

It localises to the cytoplasm. It is found in the nucleus. Functionally, the proteasome degrades poly-ubiquitinated proteins in the cytoplasm and in the nucleus. It is essential for the regulated turnover of proteins and for the removal of misfolded proteins. The proteasome is a multicatalytic proteinase complex that is characterized by its ability to cleave peptides with Arg, Phe, Tyr, Leu, and Glu adjacent to the leaving group at neutral or slightly basic pH. It has an ATP-dependent proteolytic activity. The protein is Probable proteasome subunit alpha type-7 (PRE10) of Encephalitozoon cuniculi (strain GB-M1) (Microsporidian parasite).